Reading from the N-terminus, the 822-residue chain is Ras GTPase-activating-like protein rgaA (822 aa).

Positions 1-36 are disordered; the sequence is MNKEEYSDISDSESEEVHETNNHNEHEHEEEDDTPE. Over residues 15–27 the composition is skewed to basic and acidic residues; that stretch reads EEVHETNNHNEHE. A coiled-coil region spans residues 104-152; it reads EDKESDWIAEIQELKRNLVSEVRRNHTLERDLNRLDKRIALLIKNRGNI. The segment at 161 to 822 is required for interaction to rac1A; sequence GLKAPKHKGD…IHLLNKLFLY (662 aa). One can recognise a Ras-GAP domain in the interval 234–477; that stretch reads FLLLSLYRLS…GDIKNYLQEI (244 aa).

In terms of assembly, heterotetramer. Quaternary complex with activated rac1A, ctxA and ctxB. Interacts directly with rac1A and ctxA. Preferentially interacts with activated forms of rac1A, rac1B and rac1C. Interacts with racE.

It localises to the cytoplasm. It is found in the cell cortex. The protein localises to the cleavage furrow. Functionally, part of signaling pathway that is required for completion of cytokinesis. gapA and rgaA control cortexillin localization to the cleavage furrow and hence may be involved in cleavage of the midbody in the final stage of cytokinesis by regulating the actin cytoskeleton. Forms a complex by linking activated rac1A to ctxA. Assembly of this complex is necessary for the recruitment of cortexillin to the midzone of a dividing cell. Overexpression leads to the suppression of the formation of cellular projections containing F-actin and to a defect in cytokinesis. The polypeptide is Ras GTPase-activating-like protein rgaA (rgaA) (Dictyostelium discoideum (Social amoeba)).